The following is a 114-amino-acid chain: Flagellar hook-basal body complex protein FliE (114 aa).

The protein belongs to the FliE family.

Its subcellular location is the bacterial flagellum basal body. The protein is Flagellar hook-basal body complex protein FliE of Desulfitobacterium hafniense (strain Y51).